Here is a 374-residue protein sequence, read N- to C-terminus: Flagellar P-ring protein 1 (374 aa).

The N-terminal stretch at Met1–Ala26 is a signal peptide.

It belongs to the FlgI family. In terms of assembly, the basal body constitutes a major portion of the flagellar organelle and consists of four rings (L,P,S, and M) mounted on a central rod.

The protein localises to the periplasm. The protein resides in the bacterial flagellum basal body. Assembles around the rod to form the L-ring and probably protects the motor/basal body from shearing forces during rotation. The polypeptide is Flagellar P-ring protein 1 (Photobacterium profundum (strain SS9)).